A 206-amino-acid chain; its full sequence is Large ribosomal subunit protein eL13x (206 aa).

A disordered region spans residues 186–206 (NARHAGARAKRAAEAEKEEKK). The span at 196–206 (RAAEAEKEEKK) shows a compositional bias: basic and acidic residues.

The protein belongs to the eukaryotic ribosomal protein eL13 family.

This chain is Large ribosomal subunit protein eL13x (RPL13D), found in Arabidopsis thaliana (Mouse-ear cress).